The primary structure comprises 381 residues: Erythronate-4-phosphate dehydrogenase (381 aa).

The substrate site is built by Ser-45 and Thr-67. NAD(+) is bound by residues 127–128 (QV), Asp-147, and Thr-176. Arg-209 is an active-site residue. Asp-233 contacts NAD(+). Residue Glu-238 is part of the active site. His-255 serves as the catalytic Proton donor. Position 258 (Gly-258) interacts with NAD(+). Tyr-259 is a substrate binding site.

Belongs to the D-isomer specific 2-hydroxyacid dehydrogenase family. PdxB subfamily. In terms of assembly, homodimer.

Its subcellular location is the cytoplasm. The catalysed reaction is 4-phospho-D-erythronate + NAD(+) = (R)-3-hydroxy-2-oxo-4-phosphooxybutanoate + NADH + H(+). It participates in cofactor biosynthesis; pyridoxine 5'-phosphate biosynthesis; pyridoxine 5'-phosphate from D-erythrose 4-phosphate: step 2/5. Catalyzes the oxidation of erythronate-4-phosphate to 3-hydroxy-2-oxo-4-phosphonooxybutanoate. The sequence is that of Erythronate-4-phosphate dehydrogenase from Vibrio cholerae serotype O1 (strain ATCC 39315 / El Tor Inaba N16961).